Reading from the N-terminus, the 260-residue chain is MLIIPAIDIKEGKCVRLTRGDFAQKKIYLDNPADMAIIWRKQNAKMLHVVDLDAALTGEMVNFEKIREIVELLDIPIQVGGGIRSVEAVEKYLSIGVSRVVIGSAAVTNPSLVADLLKKYRPSQIVVGIDAEHGVPKIKGWTESSNMQDYELALEMKKLGVERIIYTDITRDGMLQGVGYETTKRFAEKAGMKITASGGVSTSDDLHKLRSLERFGVDSVIIGKALYECNFPCQELWYAYEQDLGIDGEFSTARKKECCR.

Asp-8 functions as the Proton acceptor in the catalytic mechanism. The active-site Proton donor is Asp-130.

It belongs to the HisA/HisF family.

The protein localises to the cytoplasm. The catalysed reaction is 1-(5-phospho-beta-D-ribosyl)-5-[(5-phospho-beta-D-ribosylamino)methylideneamino]imidazole-4-carboxamide = 5-[(5-phospho-1-deoxy-D-ribulos-1-ylimino)methylamino]-1-(5-phospho-beta-D-ribosyl)imidazole-4-carboxamide. It functions in the pathway amino-acid biosynthesis; L-histidine biosynthesis; L-histidine from 5-phospho-alpha-D-ribose 1-diphosphate: step 4/9. This Chlorobaculum parvum (strain DSM 263 / NCIMB 8327) (Chlorobium vibrioforme subsp. thiosulfatophilum) protein is 1-(5-phosphoribosyl)-5-[(5-phosphoribosylamino)methylideneamino] imidazole-4-carboxamide isomerase.